The following is a 229-amino-acid chain: Casparian strip membrane protein 1 (229 aa).

The Cytoplasmic portion of the chain corresponds to 1 to 67; the sequence is MSTSEAGAAA…FRRADRGSRC (67 aa). The helical transmembrane segment at 68-88 threads the bilayer; sequence VALLDFVLRVAAFGPALAAAI. Topologically, residues 89-115 are extracellular; sequence ATGTSDETLSVFTQFFQFHARFDDFPA. Residues 116-136 form a helical membrane-spanning segment; the sequence is LLFFMVANAIAAGYLVLSLPF. The Cytoplasmic portion of the chain corresponds to 137–157; the sequence is SAVIVLRPQAIGLRHLLLVCD. Residues 158 to 178 traverse the membrane as a helical segment; it reads MIIAALLTAAAAAAAAIVDLA. Topologically, residues 179–205 are extracellular; it reads HSGNLRANWVPICMQFHGFCQRTSGAV. The helical transmembrane segment at 206 to 226 threads the bilayer; that stretch reads VGSFLAVLVLLFLVILAAFAI. The Cytoplasmic segment spans residues 227 to 229; it reads RKR.

The protein belongs to the Casparian strip membrane proteins (CASP) family. As to quaternary structure, homodimer and heterodimers.

It localises to the cell membrane. Its function is as follows. Regulates membrane-cell wall junctions and localized cell wall deposition. Required for establishment of the Casparian strip membrane domain (CSD) and the subsequent formation of Casparian strips, a cell wall modification of the root endodermis that determines an apoplastic barrier between the intraorganismal apoplasm and the extraorganismal apoplasm and prevents lateral diffusion. The chain is Casparian strip membrane protein 1 from Sorghum bicolor (Sorghum).